Here is a 130-residue protein sequence, read N- to C-terminus: Small ribosomal subunit protein uS9 (130 aa).

Residues 110-130 (AKERKKYGRKGARARFQFSKR) are disordered. The segment covering 111-130 (KERKKYGRKGARARFQFSKR) has biased composition (basic residues).

This sequence belongs to the universal ribosomal protein uS9 family.

The protein is Small ribosomal subunit protein uS9 of Syntrophotalea carbinolica (strain DSM 2380 / NBRC 103641 / GraBd1) (Pelobacter carbinolicus).